Reading from the N-terminus, the 625-residue chain is tRNA (uracil-5-)-methyltransferase homolog A (625 aa).

Disordered regions lie at residues 1–37 (MSENLDNEGPKPMESCGQESSSALSCPTVSVPPAAPA) and 145–165 (RPKADPMARRRRQEGESEPPV). Residues 27 to 37 (PTVSVPPAAPA) are compositionally biased toward low complexity. One can recognise an RRM domain in the interval 73-146 (FKLELQNVPR…RPLSVRLARP (74 aa)). Residues 180 to 209 (YAEQLERKQLECEQVLQKLAKEIGSTNRAL) adopt a coiled-coil conformation. A Phosphoserine modification is found at Ser378. 3 residues coordinate S-adenosyl-L-methionine: Gln411, Glu461, and Asp510. Catalysis depends on Cys538, which acts as the Nucleophile. Glu581 functions as the Proton acceptor in the catalytic mechanism. The segment at 594 to 625 (GTGVLGPHSPPAQPTPGPPDNTLQETGTFPSS) is disordered. Over residues 601-612 (HSPPAQPTPGPP) the composition is skewed to pro residues. Ser602 carries the post-translational modification Phosphoserine. Residues 614–625 (NTLQETGTFPSS) are compositionally biased toward polar residues.

Belongs to the class I-like SAM-binding methyltransferase superfamily. RNA M5U methyltransferase family.

Its subcellular location is the cytoplasm. It localises to the cytosol. The enzyme catalyses uridine(54) in tRNA + S-adenosyl-L-methionine = 5-methyluridine(54) in tRNA + S-adenosyl-L-homocysteine + H(+). It catalyses the reaction a uridine in mRNA + S-adenosyl-L-methionine = a 5-methyluridine in mRNA + S-adenosyl-L-homocysteine + H(+). S-adenosyl-L-methionine-dependent methyltransferase that catalyzes the formation of 5-methyl-uridine in tRNAs and some mRNAs. Mainly catalyzes the methylation of uridine at position 54 (m5U54) in cytosolic tRNAs. Also able to mediate the formation of 5-methyl-uridine in some mRNAs. This is tRNA (uracil-5-)-methyltransferase homolog A from Homo sapiens (Human).